The chain runs to 263 residues: Ribonuclease HII (263 aa).

In terms of domain architecture, RNase H type-2 spans 39-257 (AFFTGIDEAG…VKPAAAPHAA (219 aa)). A divalent metal cation is bound by residues Asp45, Glu46, and Asp157.

It belongs to the RNase HII family. Mn(2+) is required as a cofactor. The cofactor is Mg(2+).

The protein resides in the cytoplasm. The enzyme catalyses Endonucleolytic cleavage to 5'-phosphomonoester.. Functionally, endonuclease that specifically degrades the RNA of RNA-DNA hybrids. In Oleidesulfovibrio alaskensis (strain ATCC BAA-1058 / DSM 17464 / G20) (Desulfovibrio alaskensis), this protein is Ribonuclease HII.